Reading from the N-terminus, the 216-residue chain is Somatotropin (216 aa).

Residues 1–26 (MAASPRNSVLLAFALLCLPWPQEVGA) form the signal peptide. H45 contacts Zn(2+). C78 and C189 are disulfide-bonded. S131 is modified (phosphoserine). Residue E198 participates in Zn(2+) binding. Residues C206 and C214 are joined by a disulfide bond.

This sequence belongs to the somatotropin/prolactin family.

The protein resides in the secreted. Its function is as follows. Plays an important role in growth control. Its major role in stimulating body growth is to stimulate the liver and other tissues to secrete IGF1. It stimulates both the differentiation and proliferation of myoblasts. It also stimulates amino acid uptake and protein synthesis in muscle and other tissues. This chain is Somatotropin (GH1), found in Canis lupus familiaris (Dog).